The primary structure comprises 154 residues: Toxin YhaV (154 aa).

Homohexamer; forms a complex with PrlF (SohA) with stoichiometry PrlF(2)-YhaV(4), possibly as a YhaV(2)-PrlF(2)-YhaV(2) complex like the MazFE complex. May dimerize in solution.

In terms of biological role, toxic component of a type II toxin-antitoxin (TA) system. Has RNase activity in vitro. Acts as a transcription factor. The YhaV/PrlF complex binds the prlF-yhaV operon, probably negatively regulating its expression. The polypeptide is Toxin YhaV (yhaV) (Escherichia coli O6:H1 (strain CFT073 / ATCC 700928 / UPEC)).